The following is a 284-amino-acid chain: 8-methylmenaquinol:fumarate reductase membrane anchor subunit (284 aa).

In terms of assembly, the MFR complex is composed of three subunits: a flavoprotein (SdhA), an iron-sulfur protein (SdhB), and one hydrophobic anchor protein (SdhE).

Its subcellular location is the periplasm. The protein resides in the cell membrane. The catalysed reaction is 8-methylmenaquinone-6 + succinate = 8-methylmenaquinol-6 + fumarate. In terms of biological role, membrane anchor subunit of 8-methylmenaquinol:fumarate reductase (MFR), that catalyzes the reduction of fumarate using 8-methylmenaquinol-6 as electron donor. The complex shows no succinate oxidation activity. Is involved in anaerobic metabolism. SdhE likely contains the quinol/quinone binding site. This chain is 8-methylmenaquinol:fumarate reductase membrane anchor subunit, found in Wolinella succinogenes (strain ATCC 29543 / DSM 1740 / CCUG 13145 / JCM 31913 / LMG 7466 / NCTC 11488 / FDC 602W) (Vibrio succinogenes).